Consider the following 417-residue polypeptide: NADH-dependent phenylglyoxylate dehydrogenase subunit alpha (417 aa).

In terms of assembly, dimer of heteropentamers composed of an alpha (PadG), a beta (PadI), a gamma (PadE), a delta (PadF) and an epsilon (PadH) subunit.

The catalysed reaction is phenylglyoxylate + NAD(+) + CoA = benzoyl-CoA + CO2 + NADH. With respect to regulation, activated by magnesium ions and thiamine diphosphate. Its function is as follows. Involved in the anaerobic metabolism of phenylalanine and phenylacetate. Catalyzes the oxidative decarboxylation of phenylglyoxylate to benzoyl-CoA and CO(2). It can also react slowly with 2-oxo-3-methylbutanoate and use different electron acceptors such as benzyl viologen, methyl viologen, FAD or FMN, but NAD seems to be the physiological electron acceptor. Also catalyzes an isotope exchange between CO(2) and the carboxyl group which proves partial or complete reversibility of the oxidative decarboxylation reaction. The polypeptide is NADH-dependent phenylglyoxylate dehydrogenase subunit alpha (padG) (Aromatoleum evansii (Azoarcus evansii)).